The primary structure comprises 163 residues: Nucleotide-binding protein HAPS_2236 (163 aa).

The protein belongs to the YajQ family.

Functionally, nucleotide-binding protein. In Glaesserella parasuis serovar 5 (strain SH0165) (Haemophilus parasuis), this protein is Nucleotide-binding protein HAPS_2236.